The sequence spans 1210 residues: Epidermal growth factor receptor (1210 aa).

A signal peptide spans 1 to 24 (MRPSGTARTTLLVLLTALCAAGGA). Residues 25–647 (LEEKKVCQGT…VWPSGPKIPS (623 aa)) are Extracellular-facing. C31 and C58 are disulfide-bonded. The Approximate repeat unit spans residues 75–300 (DLSFLKTIQE…CVKKCPRNYV (226 aa)). 3 N-linked (GlcNAc...) asparagine glycosylation sites follow: N128, N175, and N196. 13 cysteine pairs are disulfide-bonded: C157-C187, C190-C199, C194-C207, C215-C223, C219-C231, C232-C240, C236-C248, C251-C260, C264-C291, C295-C307, C311-C326, C329-C333, and C337-C362. S229 is modified (phosphoserine). Residues N352, N413, and N444 are each glycosylated (N-linked (GlcNAc...) asparagine). The stretch at 390 to 600 (RELEILKTVK…CVKTCPAGIM (211 aa)) is one Approximate repeat. 11 disulfide bridges follow: C470–C499, C506–C515, C510–C523, C526–C535, C539–C555, C558–C571, C562–C579, C582–C591, C595–C617, C620–C628, and C624–C636. Residue N528 is glycosylated (N-linked (GlcNAc...) asparagine). N568 carries N-linked (GlcNAc...) asparagine glycosylation. 2 N-linked (GlcNAc...) asparagine glycosylation sites follow: N603 and N623. Residues 648 to 670 (IATGIVGGLLFIVVVALGIGLFM) traverse the membrane as a helical segment. The Cytoplasmic segment spans residues 671 to 1210 (RRRHIVRKRT…APPSSEFIGA (540 aa)). At T680 the chain carries Phosphothreonine; by PKC and PKD/PRKD1. The tract at residues 690–706 (LVEPLTPSGEAPNQAHL) is important for dimerization, phosphorylation and activation. T695 carries the post-translational modification Phosphothreonine; by PKD/PRKD1. S697 is modified (phosphoserine). Residues 714–981 (FKKIKVLGSG…KMARDPQRYL (268 aa)) enclose the Protein kinase domain. A Glycyl lysine isopeptide (Lys-Gly) (interchain with G-Cter in ubiquitin) cross-link involves residue K718. An ATP-binding site is contributed by 720–728 (LGSGAFGTV). Residue K739 forms a Glycyl lysine isopeptide (Lys-Gly) (interchain with G-Cter in ubiquitin) linkage. An ATP-binding site is contributed by K747. Position 747 is an N6-(2-hydroxyisobutyryl)lysine (K747). Glycyl lysine isopeptide (Lys-Gly) (interchain with G-Cter in ubiquitin) cross-links involve residues K756 and K759. 792 to 793 (TQ) is an ATP binding site. The Proton acceptor role is filled by D839. D857 contacts ATP. K869 participates in a covalent cross-link: Glycyl lysine isopeptide (Lys-Gly) (interchain with G-Cter in ubiquitin). Y871 is subject to Phosphotyrosine. Residues K931, K962, and K972 each participate in a glycyl lysine isopeptide (Lys-Gly) (interchain with G-Cter in ubiquitin) cross-link. Residues S993 and S997 each carry the phosphoserine modification. Residues Y1000 and Y1018 each carry the phosphotyrosine; by autocatalysis modification. Phosphoserine is present on residues S1028 and S1041. T1043 carries the post-translational modification Phosphothreonine. Residue S1044 is modified to Phosphoserine. C1051 carries S-palmitoyl cysteine lipidation. Position 1069 is a phosphotyrosine (Y1069). S1070 and S1071 each carry phosphoserine. 2 positions are modified to phosphotyrosine; by autocatalysis: Y1092 and Y1110. A disordered region spans residues 1113-1137 (QPLHPAPGRDLHYQNPHSNAVGNPE). The segment covering 1127–1137 (NPHSNAVGNPE) has biased composition (polar residues). C1146 carries the S-palmitoyl cysteine lipid modification. S1166 carries the post-translational modification Phosphoserine. Y1172 is modified (phosphotyrosine; by autocatalysis). Y1197 carries the phosphotyrosine modification. R1199 carries the post-translational modification Omega-N-methylarginine.

Belongs to the protein kinase superfamily. Tyr protein kinase family. EGF receptor subfamily. Binding of the ligand triggers homo- and/or heterodimerization of the receptor triggering its autophosphorylation. Heterodimer with ERBB2. Forms a complex with CCDC88A/GIV (via SH2-like region) and GNAI3 which leads to enhanced EGFR signaling and triggering of cell migration; binding of CCDC88A requires autophosphorylation of the EGFR C-terminal region, and ligand stimulation is required for recruitment of GNAI3 to the complex. Interacts with ERRFI1; inhibits dimerization of the kinase domain and autophosphorylation. Part of a complex with ERBB2 and either PIK3C2A or PIK3C2B. Interacts with GRB2; an adapter protein coupling the receptor to downstream signaling pathways. Interacts with GAB2; involved in signaling downstream of EGFR. Interacts with STAT3; mediates EGFR downstream signaling in cell proliferation. Interacts with RIPK1; involved in NF-kappa-B activation. Interacts (autophosphorylated) with CBL, CBLB and CBLC; involved in EGFR ubiquitination and regulation; interaction with CBL is reduced in the presence of tensin TNS4. Interacts with SOCS5; regulates EGFR degradation through ELOC- and ELOB-mediated ubiquitination and proteasomal degradation. Interacts with PRMT5; methylates EGFR and enhances interaction with PTPN6. Interacts (phosphorylated) with PTPN6; inhibits EGFR-dependent activation of MAPK/ERK. Interacts with COPG1; essential for regulation of EGF-dependent nuclear transport of EGFR by retrograde trafficking from the Golgi to the ER. Interacts with TNK2; this interaction is dependent on EGF stimulation and kinase activity of EGFR. Interacts with PCNA; positively regulates PCNA. Interacts with PELP1. Interacts with MUC1. Interacts with AP2M1. Interacts with FER. Interacts (via SH2 domains) with GRB2, NCK1 and NCK2. Interacts with EPS8; mediates EPS8 phosphorylation. Interacts with ATXN2. Interacts with GAREM1. Interacts (ubiquitinated) with ANKRD13A/B/D; the interaction is direct and may regulate EGFR internalization after EGF stimulation. Interacts with GPER1; the interaction occurs in an estrogen-dependent manner. Interacts (via C-terminal cytoplasmic kinase domain) with ZPR1 (via zinc fingers). Interacts with RNF115 and RNF126. Interacts with GPRC5A (via its transmembrane domain). Interacts with FAM83B; positively regulates EGFR inducing its autophosphorylation in absence of stimulation by EGF. Interacts with LAPTM4B; positively correlates with EGFR activation. Interacts with STX19. Interacts with CD44. Interacts with PGRMC1; the interaction requires PGRMC1 homodimerization. Interacts with PIKFYVE. Interacts with NEU3. Interacts with TRAF4. Interacts with the ant venom OMEGA-myrmeciitoxin(02)-Mg1a. Interacts with CD82; this interaction facilitates ligand-induced endocytosis of the receptor and its subsequent desensitization. Monoubiquitinated and polyubiquitinated upon EGF stimulation; which does not affect tyrosine kinase activity or signaling capacity but may play a role in lysosomal targeting. Polyubiquitin linkage is mainly through 'Lys-63', but linkage through 'Lys-48', 'Lys-11' and 'Lys-29' also occurs. Deubiquitinated by OTUD7B, preventing degradation. Ubiquitinated by RNF115 and RNF126. Ubiquitinated by ZNRF1 or CBL at different lysines in response to EGF stimulation; leading to recruitment of the ESCRT machinery and subsequent degradation in the lysosomes. Deubiquitinated by UCHL1 leading to the inhibition of its degradation. Post-translationally, phosphorylated on Tyr residues in response to EGF. Phosphorylation at Ser-697 is partial and occurs only if Thr-695 is phosphorylated. Phosphorylation at Thr-680 and Thr-695 by PRKD1 inhibits EGF-induced MAPK8/JNK1 activation. Dephosphorylation by PTPRJ prevents endocytosis and stabilizes the receptor at the plasma membrane. Autophosphorylation at Tyr-1199 is stimulated by methylation at Arg-1199 and enhances interaction with PTPN6. Autophosphorylation at Tyr-1092 and/or Tyr-1110 recruits STAT3. Dephosphorylated by PTPN1 and PTPN2. In terms of processing, palmitoylated on Cys residues by ZDHHC20. Palmitoylation inhibits internalization after ligand binding, and increases the persistence of tyrosine-phosphorylated EGFR at the cell membrane. Palmitoylation increases the amplitude and duration of EGFR signaling. Methylated. Methylation at Arg-1199 by PRMT5 stimulates phosphorylation at Tyr-1197.

It is found in the cell membrane. The protein resides in the endoplasmic reticulum membrane. Its subcellular location is the golgi apparatus membrane. The protein localises to the nucleus membrane. It localises to the endosome. It is found in the endosome membrane. The protein resides in the nucleus. It catalyses the reaction L-tyrosyl-[protein] + ATP = O-phospho-L-tyrosyl-[protein] + ADP + H(+). Its activity is regulated as follows. Endocytosis and inhibition of the activated EGFR by phosphatases like PTPRJ and PTPRK constitute immediate regulatory mechanisms. Upon EGF-binding phosphorylates EPS15 that regulates EGFR endocytosis and activity. Moreover, inducible feedback inhibitors including LRIG1, SOCS4, SOCS5 and ERRFI1 constitute alternative regulatory mechanisms for the EGFR signaling. In terms of biological role, receptor tyrosine kinase binding ligands of the EGF family and activating several signaling cascades to convert extracellular cues into appropriate cellular responses. Known ligands include EGF, TGFA/TGF-alpha, AREG, epigen/EPGN, BTC/betacellulin, epiregulin/EREG and HBEGF/heparin-binding EGF. Ligand binding triggers receptor homo- and/or heterodimerization and autophosphorylation on key cytoplasmic residues. The phosphorylated receptor recruits adapter proteins like GRB2 which in turn activates complex downstream signaling cascades. Activates at least 4 major downstream signaling cascades including the RAS-RAF-MEK-ERK, PI3 kinase-AKT, PLCgamma-PKC and STATs modules. May also activate the NF-kappa-B signaling cascade. Also directly phosphorylates other proteins like RGS16, activating its GTPase activity and probably coupling the EGF receptor signaling to the G protein-coupled receptor signaling. Also phosphorylates MUC1 and increases its interaction with SRC and CTNNB1/beta-catenin. Positively regulates cell migration via interaction with CCDC88A/GIV which retains EGFR at the cell membrane following ligand stimulation, promoting EGFR signaling which triggers cell migration. Plays a role in enhancing learning and memory performance. Plays a role in mammalian pain signaling (long-lasting hypersensitivity). This Mus musculus (Mouse) protein is Epidermal growth factor receptor.